Consider the following 1227-residue polypeptide: Beta-alanyl-bioamine nonribosomal peptide synthetase (1227 aa).

Residues 1-850 are adenylation; the sequence is MPQSTAQLKS…FGKNSRDFKL (850 aa). Residues 851 to 931 enclose the Carrier domain; it reads SRGRERARKV…SILTSLQNTE (81 aa). Serine 892 is subject to O-(pantetheine 4'-phosphoryl)serine. Residues 932-1227 form a condensation region; the sequence is SDFLKTQEPF…YMIKELNPSS (296 aa).

Belongs to the NRP synthetase family. It depends on pantetheine 4'-phosphate as a cofactor. As to expression, in virgin and paired males, bilaterally expressed in some cells in the head. During pairing, expressed throughout the ventral side of the body probably in ciliated neurons. Highly expressed in virgin females in cells throughout the body and only weakly expressed in sexually mature females. In virgin females, expressed in some cells in the head and on the dorsal surface and lateral edges of body.

The catalysed reaction is tryptamine + beta-alanine + ATP = beta-alanyl-tryptamine + AMP + diphosphate + H(+). The enzyme catalyses beta-alanine + ATP + H(+) = beta-alanyl-5'-AMP + diphosphate. It catalyses the reaction beta-alanyl-5'-AMP + holo-[peptidyl-carrier protein] = beta-alanyl-[peptidyl-carrier protein] + AMP + H(+). It carries out the reaction beta-alanyl-[peptidyl-carrier protein] + tryptamine = beta-alanyl-tryptamine + holo-[peptidyl-carrier protein] + H(+). Catalyzes the condensation of beta-alanine with tryptamine to form beta-alanyl-tryptamine (BATT). Beta-alanyl-tryptamine is an essential pheromone produced by the male that stimulates female sexual development during pairing. The chain is Beta-alanyl-bioamine nonribosomal peptide synthetase from Schistosoma mansoni (Blood fluke).